A 595-amino-acid polypeptide reads, in one-letter code: Alpha-1,3-galactosidase B (595 aa).

A signal peptide spans 1–22 (MKTILLFALSLLLSLSVSDVCA). PbH1 repeat units lie at residues 432–454 (TPEV…LFST), 455–477 (PKKT…LLCG), and 488–541 (CRDV…VIED).

Belongs to the glycosyl hydrolase 110 family. B subfamily.

The catalysed reaction is Hydrolysis of terminal, non-reducing branched (1-&gt;3)-alpha-D-galactosidic residues, producing free D-galactose.. It catalyses the reaction Hydrolysis of terminal, non-reducing linear (1-&gt;3)-alpha-D-galactosidic residues, producing free D-galactose.. The enzyme catalyses Hydrolysis of terminal, non-reducing alpha-D-galactose residues in alpha-D-galactosides, including galactose oligosaccharides, galactomannans and galactolipids.. In terms of biological role, alpha-galactosidase. Removes both branched alpha-1,3-linked galactose residues of blood group B antigens and linear alpha-1,3-linked galactose structures. The chain is Alpha-1,3-galactosidase B (glaB) from Bacteroides fragilis (strain ATCC 25285 / DSM 2151 / CCUG 4856 / JCM 11019 / LMG 10263 / NCTC 9343 / Onslow / VPI 2553 / EN-2).